We begin with the raw amino-acid sequence, 569 residues long: Acyl-CoA-binding domain-containing protein 5 (569 aa).

Positions 1-31 (MELFYELLLTAAASLLVAFLLARLLASAATA) are cleaved as a signal peptide. The ACB domain maps to 415 to 506 (IEKRFGVAAA…LSEAIPGWMG (92 aa)). Residues Lys-474 and Tyr-493 each coordinate an acyl-CoA. An N-linked (GlcNAc...) asparagine glycan is attached at Asn-508. Polar residues-rich tracts occupy residues 533–544 (INQHDSQGNEDN) and 552–569 (LTSSPNPEKGQSSDIPAE). The segment at 533–569 (INQHDSQGNEDNTGMYEGHLTSSPNPEKGQSSDIPAE) is disordered.

The protein belongs to the ACBP family. In terms of tissue distribution, highly expressed in seeds and leaves. Expressed at low levels in roots.

The protein localises to the endoplasmic reticulum. Binds medium- and long-chain acyl-CoA esters with high affinity. Can interact in vitro with palmitoyl-CoA and linolenoyl-CoA. Binds phosphatidic acid (PA) and phosphatidylcholine (PC) in vitro. May play a role in the biosynthesis of phospholipids. The polypeptide is Acyl-CoA-binding domain-containing protein 5 (Oryza sativa subsp. japonica (Rice)).